Here is a 1204-residue protein sequence, read N- to C-terminus: Erythroid differentiation-related factor 1 (1204 aa).

Disordered regions lie at residues 1–30 (MGDA…QAES), 220–264 (QPVS…ASSQ), 483–527 (PKKE…SDDS), and 586–613 (KKES…RGGP). 3 stretches are compositionally biased toward low complexity: residues 9–30 (AEGP…QAES), 223–241 (SSTT…NDSE), and 253–263 (SSVSEDPSASS). Positions 496-513 (NSDESYSEEEEEMPDSDE) are enriched in acidic residues. TPR repeat units lie at residues 693 to 726 (CCLC…QNAN) and 920 to 953 (DIHP…LSRK).

The protein resides in the nucleus. Functionally, transcription factor involved in erythroid differentiation. Involved in transcriptional activation of the globin gene. In Pongo abelii (Sumatran orangutan), this protein is Erythroid differentiation-related factor 1 (EDRF1).